The primary structure comprises 203 residues: Small ribosomal subunit protein uS3 (203 aa).

The protein belongs to the universal ribosomal protein uS3 family. In terms of assembly, part of the 30S ribosomal subunit. Forms a tight complex with proteins S10 and S14.

Functionally, binds the lower part of the 30S subunit head. Binds mRNA in the 70S ribosome, positioning it for translation. In Carsonella ruddii (strain PV), this protein is Small ribosomal subunit protein uS3.